The following is a 576-amino-acid chain: Sulfite reductase [NADPH] hemoprotein beta-component (576 aa).

[4Fe-4S] cluster is bound by residues Cys-435, Cys-441, Cys-480, and Cys-484. Cys-484 contributes to the siroheme binding site.

It belongs to the nitrite and sulfite reductase 4Fe-4S domain family. As to quaternary structure, alpha(8)-beta(8). The alpha component is a flavoprotein, the beta component is a hemoprotein. Siroheme is required as a cofactor. [4Fe-4S] cluster serves as cofactor.

The enzyme catalyses hydrogen sulfide + 3 NADP(+) + 3 H2O = sulfite + 3 NADPH + 4 H(+). It participates in sulfur metabolism; hydrogen sulfide biosynthesis; hydrogen sulfide from sulfite (NADPH route): step 1/1. Functionally, component of the sulfite reductase complex that catalyzes the 6-electron reduction of sulfite to sulfide. This is one of several activities required for the biosynthesis of L-cysteine from sulfate. The sequence is that of Sulfite reductase [NADPH] hemoprotein beta-component from Photorhabdus laumondii subsp. laumondii (strain DSM 15139 / CIP 105565 / TT01) (Photorhabdus luminescens subsp. laumondii).